Consider the following 614-residue polypeptide: RNA polymerase sigma factor RpoD (614 aa).

Positions Asp-168–Gly-245 are disordered. Positions Glu-193–Glu-209 are enriched in acidic residues. The segment covering Thr-215 to Asp-232 has biased composition (polar residues). Positions Met-380 to Thr-450 are sigma-70 factor domain-2. The short motif at Asp-404–Gln-407 is the Interaction with polymerase core subunit RpoC element. Residues Glu-459–Val-535 are sigma-70 factor domain-3. Residues Val-548–His-601 form a sigma-70 factor domain-4 region. A DNA-binding region (H-T-H motif) is located at residues Leu-574–Ala-593.

Belongs to the sigma-70 factor family. RpoD/SigA subfamily. In terms of assembly, interacts transiently with the RNA polymerase catalytic core.

The protein localises to the cytoplasm. In terms of biological role, sigma factors are initiation factors that promote the attachment of RNA polymerase to specific initiation sites and are then released. This sigma factor is the primary sigma factor during exponential growth. The polypeptide is RNA polymerase sigma factor RpoD (Pseudomonas putida (Arthrobacter siderocapsulatus)).